The sequence spans 445 residues: MTTQATPLTPVISRHWDDPESWTLATYQRHDRYRGYQALQKALTMPPDDVISIVKDSGLRGRGGAGFATGTKWSFIPQGDTGAAAKPHYLVVNADESEPGTCKDIPLMLATPHVLIEGVIIAAYAIRAHHAFVYVRGEVVPVLRRLHNAVAEAYAAGFLGRNIGGSGFDLELVVHAGAGAYICGEETALLDSLEGRRGQPRLRPPFPAVAGLYGCPTVINNVETIASVPSIILGGIDWFRSMGSEKSPGFTLYSLSGHVTRPGQYEAPLGITLRELLDYAGGVRAGHRLKFWTPGGSSTPLLTDEHLDVPLDYEGVGAAGSMLGTKALEIFDETTCVVRAVRRWTEFYKHESCGKCTPCREGTFWLDKIYERLETGRGSHEDIDKLLDISDSILGKSFCALGDGAASPVMSSIKHFRDEYLAHVEGGGCPFDPRDSMLVANGVDA.

61 to 70 provides a ligand contact to NAD(+); that stretch reads GRGGAGFATG. Residue 177–224 coordinates FMN; that stretch reads GAGAYICGEETALLDSLEGRRGQPRLRPPFPAVAGLYGCPTVINNVET. 4 residues coordinate [4Fe-4S] cluster: cysteine 353, cysteine 356, cysteine 359, and cysteine 399.

Belongs to the complex I 51 kDa subunit family. The cofactor is FMN. Requires [4Fe-4S] cluster as cofactor.

The catalysed reaction is a quinone + NADH + 5 H(+)(in) = a quinol + NAD(+) + 4 H(+)(out). Functionally, NDH-1 shuttles electrons from NADH, via FMN and iron-sulfur (Fe-S) centers, to quinones in the respiratory chain. The immediate electron acceptor for the enzyme in this species is believed to be menaquinone. Couples the redox reaction to proton translocation (for every two electrons transferred, four hydrogen ions are translocated across the cytoplasmic membrane), and thus conserves the redox energy in a proton gradient. In Mycobacterium bovis (strain ATCC BAA-935 / AF2122/97), this protein is NADH-quinone oxidoreductase subunit F (nuoF).